Consider the following 308-residue polypeptide: tRNA dimethylallyltransferase (308 aa).

10 to 17 (GPTGVGKT) provides a ligand contact to ATP. 12-17 (TGVGKT) contacts substrate. The tract at residues 35–38 (DSRQ) is interaction with substrate tRNA.

Belongs to the IPP transferase family. As to quaternary structure, monomer. The cofactor is Mg(2+).

It carries out the reaction adenosine(37) in tRNA + dimethylallyl diphosphate = N(6)-dimethylallyladenosine(37) in tRNA + diphosphate. Catalyzes the transfer of a dimethylallyl group onto the adenine at position 37 in tRNAs that read codons beginning with uridine, leading to the formation of N6-(dimethylallyl)adenosine (i(6)A). The chain is tRNA dimethylallyltransferase from Fervidobacterium nodosum (strain ATCC 35602 / DSM 5306 / Rt17-B1).